The primary structure comprises 424 residues: Protein CLP1 homolog 5 (424 aa).

ATP-binding positions include E16, T56, and 124 to 129 (DSGKST).

The protein belongs to the Clp1 family. Clp1 subfamily. In terms of assembly, forms a complex with cleavage and polyadenylation specificity factor (CPSF) subunits PCFS1, FIPS3 and CPSF30.

It is found in the nucleus. In terms of biological role, required for endonucleolytic cleavage during polyadenylation-dependent pre-mRNA 3'-end formation. This is Protein CLP1 homolog 5 from Arabidopsis thaliana (Mouse-ear cress).